Consider the following 340-residue polypeptide: Protein pelota homolog (340 aa).

This sequence belongs to the eukaryotic release factor 1 family. Pelota subfamily. Monomer. Requires a divalent metal cation as cofactor.

The protein resides in the cytoplasm. Its function is as follows. May function in recognizing stalled ribosomes, interact with stem-loop structures in stalled mRNA molecules, and effect endonucleolytic cleavage of the mRNA. May play a role in the release non-functional ribosomes and degradation of damaged mRNAs. Has endoribonuclease activity. The polypeptide is Protein pelota homolog (Methanosphaerula palustris (strain ATCC BAA-1556 / DSM 19958 / E1-9c)).